Reading from the N-terminus, the 432-residue chain is MVRNVVVIGTQWGDEGKGKIVDWLTDRAAGVIRFQGGHNAGHTLVVNGEKTVLHLIPSGILRKDVICYIGNGVVLSPGALLDEMSMLEQAGVDVSGRLRISEACPLILPYHIAVDGARELAKGPEKIGTTGRGIGPAYEDKIARRAIRLQDLFYPERFASKLKEVLDYHNFLLKNYYHTATVDYDQILDECLKKAERIQPMVADVPKLLFEANKAGNNLLFEGAQGALLDIDHGTYPFVTSSNCIAGAASVGSGVGPQLLGYVLGITKAYTTRVGSGPFPTELADTTGEYLAQRGNEFGSTTGRPRRCGWFDAVATRRSIQINGVSGLCITKLDVLDGLEKLKICTGYKSKQSDRLYDALPFGADDLADIEPVYEELPGWQACTAGIKDFDQLPKTAQNYLKRIEEVCQTPISMISTGPDRIETIVFHHPFG.

GTP-binding positions include 13–19 and 41–43; these read GDEGKGK and GHT. Aspartate 14 acts as the Proton acceptor in catalysis. Mg(2+)-binding residues include aspartate 14 and glycine 41. IMP contacts are provided by residues 14–17, 39–42, threonine 130, arginine 144, glutamine 225, threonine 240, and arginine 304; these read DEGK and NAGH. The active-site Proton donor is the histidine 42. 300-306 is a binding site for substrate; it reads STTGRPR. GTP contacts are provided by residues arginine 306, 332-334, and 416-418; these read KLD and STG.

Belongs to the adenylosuccinate synthetase family. Homodimer. It depends on Mg(2+) as a cofactor.

Its subcellular location is the cytoplasm. It catalyses the reaction IMP + L-aspartate + GTP = N(6)-(1,2-dicarboxyethyl)-AMP + GDP + phosphate + 2 H(+). It participates in purine metabolism; AMP biosynthesis via de novo pathway; AMP from IMP: step 1/2. Its function is as follows. Plays an important role in the de novo pathway of purine nucleotide biosynthesis. Catalyzes the first committed step in the biosynthesis of AMP from IMP. In Nitrosomonas eutropha (strain DSM 101675 / C91 / Nm57), this protein is Adenylosuccinate synthetase.